Consider the following 355-residue polypeptide: Probable dual-specificity RNA methyltransferase RlmN (355 aa).

Glu89 serves as the catalytic Proton acceptor. The region spanning 95 to 322 is the Radical SAM core domain; the sequence is YENRKTVCLS…KRLGVPTSIR (228 aa). Cys102 and Cys333 are oxidised to a cystine. 3 residues coordinate [4Fe-4S] cluster: Cys109, Cys113, and Cys116. S-adenosyl-L-methionine is bound by residues 159–160, Ser191, 214–216, and Asn290; these read GE and SLH. The active-site S-methylcysteine intermediate is the Cys333.

Belongs to the radical SAM superfamily. RlmN family. [4Fe-4S] cluster serves as cofactor.

The protein localises to the cytoplasm. The catalysed reaction is adenosine(2503) in 23S rRNA + 2 reduced [2Fe-2S]-[ferredoxin] + 2 S-adenosyl-L-methionine = 2-methyladenosine(2503) in 23S rRNA + 5'-deoxyadenosine + L-methionine + 2 oxidized [2Fe-2S]-[ferredoxin] + S-adenosyl-L-homocysteine. It carries out the reaction adenosine(37) in tRNA + 2 reduced [2Fe-2S]-[ferredoxin] + 2 S-adenosyl-L-methionine = 2-methyladenosine(37) in tRNA + 5'-deoxyadenosine + L-methionine + 2 oxidized [2Fe-2S]-[ferredoxin] + S-adenosyl-L-homocysteine. Functionally, specifically methylates position 2 of adenine 2503 in 23S rRNA and position 2 of adenine 37 in tRNAs. The protein is Probable dual-specificity RNA methyltransferase RlmN of Thermus thermophilus (strain ATCC 27634 / DSM 579 / HB8).